The sequence spans 196 residues: Pyridoxal 5'-phosphate synthase subunit PdxT (196 aa).

Gly-47–Ser-49 contacts L-glutamine. Catalysis depends on Cys-79, which acts as the Nucleophile. L-glutamine is bound by residues Arg-106 and Ile-134 to Arg-135. Residues His-170 and Glu-172 each act as charge relay system in the active site.

This sequence belongs to the glutaminase PdxT/SNO family. As to quaternary structure, in the presence of PdxS, forms a dodecamer of heterodimers. Only shows activity in the heterodimer.

The enzyme catalyses aldehydo-D-ribose 5-phosphate + D-glyceraldehyde 3-phosphate + L-glutamine = pyridoxal 5'-phosphate + L-glutamate + phosphate + 3 H2O + H(+). It catalyses the reaction L-glutamine + H2O = L-glutamate + NH4(+). It participates in cofactor biosynthesis; pyridoxal 5'-phosphate biosynthesis. Its function is as follows. Catalyzes the hydrolysis of glutamine to glutamate and ammonia as part of the biosynthesis of pyridoxal 5'-phosphate. The resulting ammonia molecule is channeled to the active site of PdxS. This is Pyridoxal 5'-phosphate synthase subunit PdxT from Bacillus mycoides (strain KBAB4) (Bacillus weihenstephanensis).